Reading from the N-terminus, the 197-residue chain is GTP cyclohydrolase-2 (197 aa).

49–53 (RVHSE) serves as a coordination point for GTP. Zn(2+) contacts are provided by C54, C65, and C67. GTP is bound by residues Q70, 92-94 (EGR), and T114. D126 serves as the catalytic Proton acceptor. Catalysis depends on R128, which acts as the Nucleophile. T149 and K154 together coordinate GTP.

This sequence belongs to the GTP cyclohydrolase II family. As to quaternary structure, homodimer. Zn(2+) serves as cofactor.

The enzyme catalyses GTP + 4 H2O = 2,5-diamino-6-hydroxy-4-(5-phosphoribosylamino)-pyrimidine + formate + 2 phosphate + 3 H(+). It functions in the pathway cofactor biosynthesis; riboflavin biosynthesis; 5-amino-6-(D-ribitylamino)uracil from GTP: step 1/4. Its function is as follows. Catalyzes the conversion of GTP to 2,5-diamino-6-ribosylamino-4(3H)-pyrimidinone 5'-phosphate (DARP), formate and pyrophosphate. This Cronobacter sakazakii (strain ATCC BAA-894) (Enterobacter sakazakii) protein is GTP cyclohydrolase-2.